The chain runs to 252 residues: Putative endonuclease C1F12.06c (252 aa).

The Mg(2+) site is built by D43 and D114.

Belongs to the endonuclease V family.

Its subcellular location is the cytoplasm. The protein localises to the nucleus. The polypeptide is Putative endonuclease C1F12.06c (Schizosaccharomyces pombe (strain 972 / ATCC 24843) (Fission yeast)).